A 286-amino-acid polypeptide reads, in one-letter code: Putative sugar uptake protein lmo0176 (286 aa).

The next 8 membrane-spanning stretches (helical) occupy residues M4–S26, G33–L55, L114–A136, G149–I167, A177–H194, L207–A226, V230–I252, and L264–A283.

It belongs to the GRP transporter (TC 2.A.7.5) family.

It localises to the cell membrane. This chain is Putative sugar uptake protein lmo0176, found in Listeria monocytogenes serovar 1/2a (strain ATCC BAA-679 / EGD-e).